Here is a 740-residue protein sequence, read N- to C-terminus: Elongation factor 2 (740 aa).

A tr-type G domain is found at 18 to 263 (EQVRNIGIIA…MVVRWVPNPR (246 aa)). Residues 27 to 34 (AHVDHGKT), 93 to 97 (DTPGH), and 147 to 150 (NKVD) each bind GTP. A Diphthamide modification is found at H606.

Belongs to the TRAFAC class translation factor GTPase superfamily. Classic translation factor GTPase family. EF-G/EF-2 subfamily.

Its subcellular location is the cytoplasm. Functionally, catalyzes the GTP-dependent ribosomal translocation step during translation elongation. During this step, the ribosome changes from the pre-translocational (PRE) to the post-translocational (POST) state as the newly formed A-site-bound peptidyl-tRNA and P-site-bound deacylated tRNA move to the P and E sites, respectively. Catalyzes the coordinated movement of the two tRNA molecules, the mRNA and conformational changes in the ribosome. The polypeptide is Elongation factor 2 (Ignicoccus hospitalis (strain KIN4/I / DSM 18386 / JCM 14125)).